The chain runs to 238 residues: tRNA (guanine-N(7)-)-methyltransferase (238 aa).

Positions 68, 93, 120, and 143 each coordinate S-adenosyl-L-methionine. Aspartate 143 is an active-site residue. Substrate contacts are provided by residues lysine 147, aspartate 179, and 216 to 219 (TKFE).

Belongs to the class I-like SAM-binding methyltransferase superfamily. TrmB family.

The catalysed reaction is guanosine(46) in tRNA + S-adenosyl-L-methionine = N(7)-methylguanosine(46) in tRNA + S-adenosyl-L-homocysteine. It functions in the pathway tRNA modification; N(7)-methylguanine-tRNA biosynthesis. In terms of biological role, catalyzes the formation of N(7)-methylguanine at position 46 (m7G46) in tRNA. The polypeptide is tRNA (guanine-N(7)-)-methyltransferase (Shewanella sp. (strain MR-4)).